The primary structure comprises 402 residues: Deoxyguanosinetriphosphate triphosphohydrolase-like protein (402 aa).

The segment at 20–39 (PAFSRGRLVPEPESPTRTPF) is disordered. In terms of domain architecture, HD spans 73 to 217 (RLTHTIEVAQ…AAIADDIAYN (145 aa)).

It belongs to the dGTPase family. Type 2 subfamily.

The sequence is that of Deoxyguanosinetriphosphate triphosphohydrolase-like protein from Brucella canis (strain ATCC 23365 / NCTC 10854 / RM-666).